Consider the following 520-residue polypeptide: Poly(A)-specific ribonuclease PNLDC1 (520 aa).

Mg(2+)-binding residues include aspartate 17, glutamate 19, aspartate 260, and aspartate 354. A helical transmembrane segment spans residues 495 to 515; it reads VNCLLQVCGIVTAWALLAFIL.

It belongs to the CAF1 family. It depends on Mg(2+) as a cofactor.

The protein resides in the endoplasmic reticulum membrane. It carries out the reaction Exonucleolytic cleavage of poly(A) to 5'-AMP.. In terms of biological role, 3'-exoribonuclease that has a preference for poly(A) tails of mRNAs, thereby efficiently degrading poly(A) tails. Exonucleolytic degradation of the poly(A) tail is often the first step in the decay of eukaryotic mRNAs and is also used to silence certain maternal mRNAs translationally during oocyte maturation and early embryonic development. May act as a regulator of multipotency in embryonic stem cells. Is a critical factor for proper spermatogenesis, involved in pre-piRNAs processing to generate mature piRNAs. This Homo sapiens (Human) protein is Poly(A)-specific ribonuclease PNLDC1.